The sequence spans 431 residues: Tryptophan synthase beta chain (431 aa).

Lysine 109 carries the post-translational modification N6-(pyridoxal phosphate)lysine.

This sequence belongs to the TrpB family. As to quaternary structure, tetramer of two alpha and two beta chains. Pyridoxal 5'-phosphate serves as cofactor.

The catalysed reaction is (1S,2R)-1-C-(indol-3-yl)glycerol 3-phosphate + L-serine = D-glyceraldehyde 3-phosphate + L-tryptophan + H2O. The protein operates within amino-acid biosynthesis; L-tryptophan biosynthesis; L-tryptophan from chorismate: step 5/5. The beta subunit is responsible for the synthesis of L-tryptophan from indole and L-serine. The chain is Tryptophan synthase beta chain from Deinococcus radiodurans (strain ATCC 13939 / DSM 20539 / JCM 16871 / CCUG 27074 / LMG 4051 / NBRC 15346 / NCIMB 9279 / VKM B-1422 / R1).